A 450-amino-acid polypeptide reads, in one-letter code: Tubulin beta chain (450 aa).

GTP contacts are provided by glutamate 69, serine 138, glycine 142, threonine 143, glycine 144, asparagine 204, and asparagine 226. Residue glutamate 69 coordinates Mg(2+). The interval 427 to 450 (DATIDQEFEDEEEVEEQNDDSDEQ) is disordered. The segment covering 430–450 (IDQEFEDEEEVEEQNDDSDEQ) has biased composition (acidic residues).

It belongs to the tubulin family. In terms of assembly, dimer of alpha and beta chains. A typical microtubule is a hollow water-filled tube with an outer diameter of 25 nm and an inner diameter of 15 nM. Alpha-beta heterodimers associate head-to-tail to form protofilaments running lengthwise along the microtubule wall with the beta-tubulin subunit facing the microtubule plus end conferring a structural polarity. Microtubules usually have 13 protofilaments but different protofilament numbers can be found in some organisms and specialized cells. The cofactor is Mg(2+).

The protein localises to the cytoplasm. It is found in the cytoskeleton. In terms of biological role, tubulin is the major constituent of microtubules, a cylinder consisting of laterally associated linear protofilaments composed of alpha- and beta-tubulin heterodimers. Microtubules grow by the addition of GTP-tubulin dimers to the microtubule end, where a stabilizing cap forms. Below the cap, tubulin dimers are in GDP-bound state, owing to GTPase activity of alpha-tubulin. The sequence is that of Tubulin beta chain from Bombyx mori (Silk moth).